Here is a 361-residue protein sequence, read N- to C-terminus: Uroporphyrinogen decarboxylase (361 aa).

Residues 27-31 (RQAGR), Asp77, Tyr154, Thr209, and His327 contribute to the substrate site.

The protein belongs to the uroporphyrinogen decarboxylase family. In terms of assembly, homodimer.

It localises to the cytoplasm. It catalyses the reaction uroporphyrinogen III + 4 H(+) = coproporphyrinogen III + 4 CO2. It participates in porphyrin-containing compound metabolism; protoporphyrin-IX biosynthesis; coproporphyrinogen-III from 5-aminolevulinate: step 4/4. Functionally, catalyzes the decarboxylation of four acetate groups of uroporphyrinogen-III to yield coproporphyrinogen-III. The polypeptide is Uroporphyrinogen decarboxylase (Coxiella burnetii (strain Dugway 5J108-111)).